Consider the following 265-residue polypeptide: Tryptophan synthase alpha chain (265 aa).

Active-site proton acceptor residues include Glu-49 and Asp-60.

The protein belongs to the TrpA family. As to quaternary structure, tetramer of two alpha and two beta chains.

The enzyme catalyses (1S,2R)-1-C-(indol-3-yl)glycerol 3-phosphate + L-serine = D-glyceraldehyde 3-phosphate + L-tryptophan + H2O. The protein operates within amino-acid biosynthesis; L-tryptophan biosynthesis; L-tryptophan from chorismate: step 5/5. In terms of biological role, the alpha subunit is responsible for the aldol cleavage of indoleglycerol phosphate to indole and glyceraldehyde 3-phosphate. In Desulfosudis oleivorans (strain DSM 6200 / JCM 39069 / Hxd3) (Desulfococcus oleovorans), this protein is Tryptophan synthase alpha chain.